A 711-amino-acid polypeptide reads, in one-letter code: Constitutive ornithine decarboxylase (711 aa).

The residue at position 347 (lysine 347) is an N6-(pyridoxal phosphate)lysine.

It belongs to the Orn/Lys/Arg decarboxylase class-I family. It depends on pyridoxal 5'-phosphate as a cofactor.

The enzyme catalyses L-ornithine + H(+) = putrescine + CO2. Its pathway is amine and polyamine biosynthesis; putrescine biosynthesis via L-ornithine pathway; putrescine from L-ornithine: step 1/1. The chain is Constitutive ornithine decarboxylase (speC) from Escherichia coli (strain K12).